The following is a 204-amino-acid chain: Large ribosomal subunit protein uL3 (204 aa).

This sequence belongs to the universal ribosomal protein uL3 family. Part of the 50S ribosomal subunit. Forms a cluster with proteins L14 and L19.

In terms of biological role, one of the primary rRNA binding proteins, it binds directly near the 3'-end of the 23S rRNA, where it nucleates assembly of the 50S subunit. This is Large ribosomal subunit protein uL3 from Azobacteroides pseudotrichonymphae genomovar. CFP2.